We begin with the raw amino-acid sequence, 227 residues long: NDR1/HIN1-like protein 10 (227 aa).

A helical transmembrane segment spans residues Val42–Ile62. Asn138 and Asn210 each carry an N-linked (GlcNAc...) asparagine glycan.

In terms of tissue distribution, expressed in senescing leaves.

It localises to the cell membrane. May play a role in plant immunity. The polypeptide is NDR1/HIN1-like protein 10 (Arabidopsis thaliana (Mouse-ear cress)).